The sequence spans 455 residues: Probable transcription factor GLK1 (455 aa).

Positions 145–163 are enriched in low complexity; that stretch reads AAVEAKSSSPSSTTSSSQE. The interval 145–183 is disordered; it reads AAVEAKSSSPSSTTSSSQEAESRHKSSSKSSHGKKKAKV. A compositionally biased stretch (basic residues) spans 169 to 181; it reads KSSSKSSHGKKKA. Positions 177-236 constitute an HTH myb-type domain; that stretch reads GKKKAKVDWTPELHRRFVQAVEQLGIDKAVPSRILEIMGIDSLTRHNIASHLQKYRSHRK. The segment at residues 207-232 is a DNA-binding region (H-T-H motif); it reads PSRILEIMGIDSLTRHNIASHLQKYR.

Expressed in leaves.

It localises to the nucleus. Probable transcriptional activator that promotes chloroplast development. Acts as an activator of nuclear photosynthetic genes involved in chlorophyll biosynthesis, light harvesting, and electron transport. The protein is Probable transcription factor GLK1 (GLK1) of Oryza sativa subsp. japonica (Rice).